Consider the following 692-residue polypeptide: Protein adenylyltransferase SelO-1, mitochondrial (692 aa).

The transit peptide at 1-24 (MASVGSRLTRFYISRPGVIARRFL) directs the protein to the mitochondrion. ATP-binding residues include glycine 142, glycine 144, lysine 176, aspartate 188, glycine 189, arginine 246, and arginine 253. Residue aspartate 337 is the Proton acceptor of the active site. The Mg(2+) site is built by asparagine 338 and aspartate 347. Residue aspartate 347 participates in ATP binding. A disordered region spans residues 637–676 (LEQPGWMGRGGAAIPGERDETEEEGSNSSGAGARGLVPYD). Position 690 (selenocysteine 690) is a non-standard amino acid, selenocysteine.

Belongs to the SELO family. The cofactor is Mg(2+).

It localises to the mitochondrion. The enzyme catalyses L-tyrosyl-[protein] + ATP = O-(5'-adenylyl)-L-tyrosyl-[protein] + diphosphate. It carries out the reaction L-threonyl-[protein] + ATP = 3-O-(5'-adenylyl)-L-threonyl-[protein] + diphosphate. The catalysed reaction is L-seryl-[protein] + ATP = 3-O-(5'-adenylyl)-L-seryl-[protein] + diphosphate. Catalyzes the transfer of adenosine 5'-monophosphate (AMP) to Ser, Thr and Tyr residues of target proteins (AMPylation). May be a redox-active mitochondrial selenoprotein which interacts with a redox target protein. This is Protein adenylyltransferase SelO-1, mitochondrial from Danio rerio (Zebrafish).